Reading from the N-terminus, the 78-residue chain is Protein SlyX homolog (78 aa).

Belongs to the SlyX family.

This Xanthomonas axonopodis pv. citri (strain 306) protein is Protein SlyX homolog.